Consider the following 254-residue polypeptide: Phosphate import ATP-binding protein PstB 2 (254 aa).

The ABC transporter domain maps to 9 to 249 (FNIDNLNLFY…PRDDRTRGYV (241 aa)). 41–48 (GPSGCGKS) contacts ATP.

It belongs to the ABC transporter superfamily. Phosphate importer (TC 3.A.1.7) family. The complex is composed of two ATP-binding proteins (PstB), two transmembrane proteins (PstC and PstA) and a solute-binding protein (PstS).

Its subcellular location is the cell inner membrane. It carries out the reaction phosphate(out) + ATP + H2O = ADP + 2 phosphate(in) + H(+). In terms of biological role, part of the ABC transporter complex PstSACB involved in phosphate import. Responsible for energy coupling to the transport system. This chain is Phosphate import ATP-binding protein PstB 2, found in Photobacterium profundum (strain SS9).